The following is a 152-amino-acid chain: 3-hydroxyacyl-[acyl-carrier-protein] dehydratase FabZ (152 aa).

The active site involves His-54.

It belongs to the thioester dehydratase family. FabZ subfamily.

Its subcellular location is the cytoplasm. It catalyses the reaction a (3R)-hydroxyacyl-[ACP] = a (2E)-enoyl-[ACP] + H2O. Functionally, involved in unsaturated fatty acids biosynthesis. Catalyzes the dehydration of short chain beta-hydroxyacyl-ACPs and long chain saturated and unsaturated beta-hydroxyacyl-ACPs. This is 3-hydroxyacyl-[acyl-carrier-protein] dehydratase FabZ from Roseobacter denitrificans (strain ATCC 33942 / OCh 114) (Erythrobacter sp. (strain OCh 114)).